A 256-amino-acid polypeptide reads, in one-letter code: Pimeloyl-[acyl-carrier protein] methyl ester esterase (256 aa).

The 228-residue stretch at 15-242 folds into the AB hydrolase-1 domain; the sequence is HLVLLHGWGL…AAHAPFISHP (228 aa). Residues Trp-22, 82-83, and 143-147 contribute to the substrate site; these read SL and FLALQ. Residue Ser-82 is the Nucleophile of the active site. Catalysis depends on residues Asp-207 and His-235. His-235 lines the substrate pocket.

Belongs to the AB hydrolase superfamily. Carboxylesterase BioH family. As to quaternary structure, monomer.

It localises to the cytoplasm. It catalyses the reaction 6-carboxyhexanoyl-[ACP] methyl ester + H2O = 6-carboxyhexanoyl-[ACP] + methanol + H(+). The protein operates within cofactor biosynthesis; biotin biosynthesis. Functionally, the physiological role of BioH is to remove the methyl group introduced by BioC when the pimeloyl moiety is complete. It allows to synthesize pimeloyl-ACP via the fatty acid synthetic pathway through the hydrolysis of the ester bonds of pimeloyl-ACP esters. The protein is Pimeloyl-[acyl-carrier protein] methyl ester esterase of Escherichia coli O45:K1 (strain S88 / ExPEC).